A 689-amino-acid polypeptide reads, in one-letter code: tRNA 5-methylaminomethyl-2-thiouridine biosynthesis bifunctional protein MnmC (689 aa).

Positions 1 to 245 are tRNA (mnm(5)s(2)U34)-methyltransferase; the sequence is MNQRPIQTAT…KREMLTGTLP (245 aa). The tract at residues 270-689 is FAD-dependent cmnm(5)s(2)U34 oxidoreductase; it reads IGGGIVSALT…RSPATQESSR (420 aa).

In the N-terminal section; belongs to the methyltransferase superfamily. tRNA (mnm(5)s(2)U34)-methyltransferase family. This sequence in the C-terminal section; belongs to the DAO family. Requires FAD as cofactor.

It localises to the cytoplasm. The catalysed reaction is 5-aminomethyl-2-thiouridine(34) in tRNA + S-adenosyl-L-methionine = 5-methylaminomethyl-2-thiouridine(34) in tRNA + S-adenosyl-L-homocysteine + H(+). In terms of biological role, catalyzes the last two steps in the biosynthesis of 5-methylaminomethyl-2-thiouridine (mnm(5)s(2)U) at the wobble position (U34) in tRNA. Catalyzes the FAD-dependent demodification of cmnm(5)s(2)U34 to nm(5)s(2)U34, followed by the transfer of a methyl group from S-adenosyl-L-methionine to nm(5)s(2)U34, to form mnm(5)s(2)U34. In Yersinia pseudotuberculosis serotype O:1b (strain IP 31758), this protein is tRNA 5-methylaminomethyl-2-thiouridine biosynthesis bifunctional protein MnmC.